Here is a 439-residue protein sequence, read N- to C-terminus: Histidine--tRNA ligase (439 aa).

Belongs to the class-II aminoacyl-tRNA synthetase family. In terms of assembly, homodimer.

It localises to the cytoplasm. The catalysed reaction is tRNA(His) + L-histidine + ATP = L-histidyl-tRNA(His) + AMP + diphosphate + H(+). This Leptospira interrogans serogroup Icterohaemorrhagiae serovar Lai (strain 56601) protein is Histidine--tRNA ligase (hisS).